Reading from the N-terminus, the 426-residue chain is MSKSENLYAQAQQLIPGGVNSPVRAFTGVGGIPLFIERADGAYLFDVDGKAYIDYVGSWGPMILGHNHPAIRQAVIEAVERGLSFGAPTEMEVKMAQLVTDLVPTMDMVRMVNSGTEATMSAIRLARGYTGRDKIIKFEGCYHGHADCLLVKAGSGALTLGQPNSPGVPADFAKHTLTCTYNDLASVRQAFEQYPQEVACIIVEPVAGNMNCIPPLPEFLPGLRALCDEFGALLIIDEVMTGFRVALAGAQDYYHVIPDLTCLGKIIGGGMPVGAFGGRREVMNALAPTGPVYQAGTLSGNPIAMAAGFACLTEISQVGVYETLTELTDSLATGLRHAAKEENIPLVVNHVGGMFGLFFTNADTVTCYQDVMNCDVERFKRFFHLMLEEGVYLAPSAFEAGFMSLAHSNEDIQKTVNAARRCFAKL.

Residue Lys-265 is modified to N6-(pyridoxal phosphate)lysine.

The protein belongs to the class-III pyridoxal-phosphate-dependent aminotransferase family. HemL subfamily. In terms of assembly, homodimer. It depends on pyridoxal 5'-phosphate as a cofactor.

It is found in the cytoplasm. It carries out the reaction (S)-4-amino-5-oxopentanoate = 5-aminolevulinate. The protein operates within porphyrin-containing compound metabolism; protoporphyrin-IX biosynthesis; 5-aminolevulinate from L-glutamyl-tRNA(Glu): step 2/2. This chain is Glutamate-1-semialdehyde 2,1-aminomutase, found in Yersinia pseudotuberculosis serotype O:1b (strain IP 31758).